A 209-amino-acid chain; its full sequence is LexA repressor (209 aa).

The segment at residues 30 to 50 (RVEIAREIGFKSPNAAEEHLK) is a DNA-binding region (H-T-H motif). Active-site for autocatalytic cleavage activity residues include Ser-126 and Lys-163.

This sequence belongs to the peptidase S24 family. As to quaternary structure, homodimer.

The enzyme catalyses Hydrolysis of Ala-|-Gly bond in repressor LexA.. Its function is as follows. Represses a number of genes involved in the response to DNA damage (SOS response), including recA and lexA. In the presence of single-stranded DNA, RecA interacts with LexA causing an autocatalytic cleavage which disrupts the DNA-binding part of LexA, leading to derepression of the SOS regulon and eventually DNA repair. This chain is LexA repressor, found in Glaesserella parasuis serovar 5 (strain SH0165) (Haemophilus parasuis).